The following is a 160-amino-acid chain: Dihydrofolate reductase (160 aa).

The region spanning 2–159 (TFSLIVATTL…YDCRFLILTR (158 aa)) is the DHFR domain. Position 6 (I6) interacts with substrate. NADP(+) contacts are provided by residues A8 and 14 to 20 (VIGKDNQ). Position 28 (D28) interacts with substrate. 46 to 47 (KT) serves as a coordination point for NADP(+). 2 residues coordinate substrate: R53 and R58. NADP(+) contacts are provided by residues 64–65 (SR) and 96–103 (GGGELFKQ). T114 is a binding site for substrate.

The protein belongs to the dihydrofolate reductase family.

The catalysed reaction is (6S)-5,6,7,8-tetrahydrofolate + NADP(+) = 7,8-dihydrofolate + NADPH + H(+). It participates in cofactor biosynthesis; tetrahydrofolate biosynthesis; 5,6,7,8-tetrahydrofolate from 7,8-dihydrofolate: step 1/1. Its function is as follows. Key enzyme in folate metabolism. Catalyzes an essential reaction for de novo glycine and purine synthesis, and for DNA precursor synthesis. The polypeptide is Dihydrofolate reductase (folA) (Haemophilus influenzae (strain ATCC 51907 / DSM 11121 / KW20 / Rd)).